The following is a 366-amino-acid chain: MSILILEAFYGGSHKQLVDLLQEELEDSVLYTLPAKKWHWRARTSALYFSQNIPTSEHYRILFASSVLNLTELAALRPDLGKLKKILYFHENQLVYPVKKCQERDFQYGYNQILSCLVADVVVFNSVFNMESFLTSIGKFMKLIPDHRPKDLESIIRPKCQVIYFPIRFPDVSRFMPKHKAAHLQKILSLKENGGNAPSTALPFQQQLRGSENLLKSFDSKSGPCDAAQQESLGCSVRQASYLKTFNSSDDSSTHHGEHKQNRCDVLAEADDQQRPLHIVWPHRWLEAVYCGCYPLCPKDLVYPEIFPAEYLYSTPEQLSKRLQNFCKRPDITRKHLYKGEMAPFSWAALHGKFRSLLTAEPREDL.

Belongs to the glycosyltransferase group 1 family. Glycosyltransferase 4 subfamily.

It localises to the cytoplasm. It is found in the nucleus. The enzyme catalyses queuosine(34) in tRNA(Asp) + GDP-alpha-D-mannose = O-4''-alpha-D-mannosylqueuosine(34) in tRNA(Asp) + GDP + H(+). Functionally, glycosyltransferase that specifically catalyzes mannosylation of cytoplasmic tRNA(Asp) modified with queuosine at position 34 (queuosine(34)). Mannosylates the cyclopentene moiety of queuosine(34) in tRNA(Asp) to form mannosyl-queuosine(34). Mannosylation of queuosine(34) in tRNA(Asp) is required to slow-down elongation at cognate codons, GAC and GAU, thereby regulating protein translation. The chain is tRNA-queuosine alpha-mannosyltransferase (GTDC1) from Bos taurus (Bovine).